Reading from the N-terminus, the 508-residue chain is GMP synthase [glutamine-hydrolyzing] (508 aa).

Residues 1–189 (MILVLDFGSQ…ALLVCGCEKT (189 aa)) enclose the Glutamine amidotransferase type-1 domain. The active-site Nucleophile is Cys-78. Active-site residues include His-163 and Glu-165. Positions 190–383 (WGMQHFAQRE…LGVSQDFLMH (194 aa)) constitute a GMPS ATP-PPase domain. Position 217–223 (217–223 (SGGVDST)) interacts with ATP.

In terms of assembly, homodimer.

The catalysed reaction is XMP + L-glutamine + ATP + H2O = GMP + L-glutamate + AMP + diphosphate + 2 H(+). Its pathway is purine metabolism; GMP biosynthesis; GMP from XMP (L-Gln route): step 1/1. In terms of biological role, catalyzes the synthesis of GMP from XMP. The chain is GMP synthase [glutamine-hydrolyzing] from Helicobacter pylori (strain G27).